The sequence spans 485 residues: Phosphoglucosamine mutase (485 aa).

Serine 133 acts as the Phosphoserine intermediate in catalysis. Residues serine 133, aspartate 274, aspartate 276, and aspartate 278 each contribute to the Mg(2+) site. Position 133 is a phosphoserine (serine 133).

The protein belongs to the phosphohexose mutase family. Mg(2+) is required as a cofactor. In terms of processing, activated by phosphorylation.

It catalyses the reaction alpha-D-glucosamine 1-phosphate = D-glucosamine 6-phosphate. Catalyzes the conversion of glucosamine-6-phosphate to glucosamine-1-phosphate. The protein is Phosphoglucosamine mutase of Crocosphaera subtropica (strain ATCC 51142 / BH68) (Cyanothece sp. (strain ATCC 51142)).